Here is a 408-residue protein sequence, read N- to C-terminus: MLPRPKAPASPRRPQTPTPSEQDADPGPASPRDTEAQRLRFRQFQYHVASGPHLALGQLWTLCRQWLRPEARSKEQMLELLVLEQFLGALPSKMRTWVQSQGPRSCREAASLVEDLTQMCQQEVLVSLDSVEPQDWSFGEEEDGKSPRSQKEPSQASELILDAVAAAPALPEESEWLETTQLQQSLHTRAEAEAPRAPGLLGSRARLPLKPSIWDEPEDLLAGPSSDLRAEGTVISSPKGPSAQRISPRRRNRNTDQSGRHQPSLKHTKGGTQEAVAGISVVPRGPRGGRPFQCADCGMVFTWVTHFIEHQKTHREEGPFPCPECGKVFLHNSVLTEHGKIHLLEPPRKKAPRSKGPRESVPPRDGAQGPVAPRSPKRPFQCSVCGKAFPWMVHLIDHQKLHTAHGHM.

The interval 1 to 34 (MLPRPKAPASPRRPQTPTPSEQDADPGPASPRDT) is disordered. One can recognise an SCAN box domain in the interval 38 to 120 (RLRFRQFQYH…SLVEDLTQMC (83 aa)). Disordered regions lie at residues 136–155 (WSFG…EPSQ), 177–203 (LETT…LLGS), and 215–273 (DEPE…GGTQ). Positions 177–187 (LETTQLQQSLH) are enriched in polar residues. 2 C2H2-type zinc fingers span residues 292-314 (FQCA…QKTH) and 320-342 (FPCP…GKIH). The tract at residues 344 to 379 (LEPPRKKAPRSKGPRESVPPRDGAQGPVAPRSPKRP) is disordered. Residues 380 to 402 (FQCSVCGKAFPWMVHLIDHQKLH) form a C2H2-type 3 zinc finger.

Its subcellular location is the nucleus. Its function is as follows. May be involved in transcriptional regulation. The chain is Zinc finger and SCAN domain-containing protein 1 (ZSCAN1) from Homo sapiens (Human).